The following is a 371-amino-acid chain: Peptide chain release factor 2 (371 aa).

An N5-methylglutamine modification is found at glutamine 253.

The protein belongs to the prokaryotic/mitochondrial release factor family. Methylated by PrmC. Methylation increases the termination efficiency of RF2.

The protein resides in the cytoplasm. Peptide chain release factor 2 directs the termination of translation in response to the peptide chain termination codons UGA and UAA. This Mycobacterium sp. (strain KMS) protein is Peptide chain release factor 2.